Here is a 547-residue protein sequence, read N- to C-terminus: MAAKDVKFGNEARVKMLRGVNVLADAVKVTLGPKGRNVVLDKSFGAPSITKDGVSVAREIELEDKFENMGAQMVKEVASKANDVAGDGTTTATLLAQAIVNEGLKAVAAGMNPMDLKRGIDKAVINAVSELKQLSVPCLDSKAITQVGTISANADETVGTLISEAMEKVGNDGVITVEEGTGLEDELEVVKGMQFDRGYLSPYFINKPETGIVELENPYILMVDKKISNIRELLPILEAVAKSSKPLLIISEDLEGEALATLVVKSMRGIVKVAAVKAPGFGDRRKAMLQDISILTAGTLISEELAMDLEKSTLEDLGQSKRVVITKDTTTIIDGSGSKKDIKNRISQIKQQIQESTSDYDKEKLNERLAKLSGGVAVLKVGAATEVEMKEKKARVEDALHATRAAVEEGVVPGGGVALVRVAQKISKILGQNEDQNVGIRVALRAMEAPLRQIVSNSGEEPSVVTNNVKDGIGNYGYNAATDEYGDMIKFGILDPTKVTRSALQYAGSVAGLMITTECMVTDLPKEEKSDLSVPPQGGMGGMGGMM.

ATP is bound by residues 30–33 (TLGP), K51, 87–91 (DGTTT), G415, 479–481 (NAA), and D495. Residues 526 to 547 (KEEKSDLSVPPQGGMGGMGGMM) form a disordered region. Residues 538-547 (GGMGGMGGMM) are compositionally biased toward gly residues.

Belongs to the chaperonin (HSP60) family. Forms a cylinder of 14 subunits composed of two heptameric rings stacked back-to-back. Interacts with the co-chaperonin GroES.

The protein resides in the cytoplasm. The enzyme catalyses ATP + H2O + a folded polypeptide = ADP + phosphate + an unfolded polypeptide.. In terms of biological role, together with its co-chaperonin GroES, plays an essential role in assisting protein folding. The GroEL-GroES system forms a nano-cage that allows encapsulation of the non-native substrate proteins and provides a physical environment optimized to promote and accelerate protein folding. This chain is Chaperonin GroEL, found in Buchnera aphidicola subsp. Tetraneura caerulescens.